The sequence spans 294 residues: Elongation factor Ts, mitochondrial 2 (294 aa).

Belongs to the EF-Ts family.

Its subcellular location is the mitochondrion. Functionally, associates with the EF-Tu.GDP complex and induces the exchange of GDP to GTP. It remains bound to the aminoacyl-tRNA.EF-Tu.GTP complex up to the GTP hydrolysis stage on the ribosome. This chain is Elongation factor Ts, mitochondrial 2, found in Paramecium tetraurelia.